The chain runs to 494 residues: Metalloprotease TIKI1 (494 aa).

The first 25 residues, 1–25 (MTMMTMMMVSWSAFLQICWILMVRA), serve as a signal peptide directing secretion. At 26–467 (NQFNPGEPSG…QEHERANHDR (442 aa)) the chain is on the extracellular side. N-linked (GlcNAc...) asparagine glycans are attached at residues Asn-234 and Asn-282. A helical transmembrane segment spans residues 468–488 (TFSGSSSRTGPALSALAVCVQ). The Cytoplasmic portion of the chain corresponds to 489–494 (MLRLLL).

The protein belongs to the TIKI family. Mn(2+) serves as cofactor. The cofactor is Co(2+).

Its subcellular location is the cell membrane. Functionally, metalloprotease that acts as a negative regulator of the Wnt signaling pathway by mediating the cleavage of the N-terminal residues of a subset of Wnt proteins. Following cleavage, Wnt proteins become oxidized and form large disulfide-bond oligomers, leading to their inactivation. This is Metalloprotease TIKI1 (trabd2a) from Danio rerio (Zebrafish).